A 250-amino-acid polypeptide reads, in one-letter code: 2,3-bisphosphoglycerate-dependent phosphoglycerate mutase (250 aa).

Substrate-binding positions include 8–15 (RHGQSAWN), 21–22 (TG), arginine 60, 87–90 (ERHY), lysine 98, 114–115 (RR), and 183–184 (GN). Histidine 9 functions as the Tele-phosphohistidine intermediate in the catalytic mechanism. The active-site Proton donor/acceptor is glutamate 87.

It belongs to the phosphoglycerate mutase family. BPG-dependent PGAM subfamily. In terms of assembly, homodimer.

The catalysed reaction is (2R)-2-phosphoglycerate = (2R)-3-phosphoglycerate. The protein operates within carbohydrate degradation; glycolysis; pyruvate from D-glyceraldehyde 3-phosphate: step 3/5. Its function is as follows. Catalyzes the interconversion of 2-phosphoglycerate and 3-phosphoglycerate. This Nitratidesulfovibrio vulgaris (strain ATCC 29579 / DSM 644 / CCUG 34227 / NCIMB 8303 / VKM B-1760 / Hildenborough) (Desulfovibrio vulgaris) protein is 2,3-bisphosphoglycerate-dependent phosphoglycerate mutase.